The primary structure comprises 610 residues: Elongation factor 4 (610 aa).

The tr-type G domain maps to 11-193 (EKIRNFSIIA…QIVEKVPAPT (183 aa)). Residues 23–28 (DHGKST) and 140–143 (NKID) each bind GTP.

The protein belongs to the TRAFAC class translation factor GTPase superfamily. Classic translation factor GTPase family. LepA subfamily.

It is found in the cell membrane. It catalyses the reaction GTP + H2O = GDP + phosphate + H(+). Required for accurate and efficient protein synthesis under certain stress conditions. May act as a fidelity factor of the translation reaction, by catalyzing a one-codon backward translocation of tRNAs on improperly translocated ribosomes. Back-translocation proceeds from a post-translocation (POST) complex to a pre-translocation (PRE) complex, thus giving elongation factor G a second chance to translocate the tRNAs correctly. Binds to ribosomes in a GTP-dependent manner. In Streptococcus pyogenes serotype M3 (strain ATCC BAA-595 / MGAS315), this protein is Elongation factor 4.